The primary structure comprises 350 residues: S-adenosylmethionine:tRNA ribosyltransferase-isomerase (350 aa).

This sequence belongs to the QueA family. In terms of assembly, monomer.

The protein localises to the cytoplasm. It catalyses the reaction 7-aminomethyl-7-carbaguanosine(34) in tRNA + S-adenosyl-L-methionine = epoxyqueuosine(34) in tRNA + adenine + L-methionine + 2 H(+). The protein operates within tRNA modification; tRNA-queuosine biosynthesis. Its function is as follows. Transfers and isomerizes the ribose moiety from AdoMet to the 7-aminomethyl group of 7-deazaguanine (preQ1-tRNA) to give epoxyqueuosine (oQ-tRNA). This chain is S-adenosylmethionine:tRNA ribosyltransferase-isomerase, found in Bacillus cereus (strain B4264).